The sequence spans 815 residues: Patatin-like phospholipase domain-containing protein LELG_00944 (815 aa).

A compositionally biased stretch (polar residues) spans 41 to 50; that stretch reads VSTTAPTTPL. Disordered stretches follow at residues 41–105 and 140–166; these read VSTT…PQLK and SENL…STSP. A compositionally biased stretch (low complexity) spans 54–73; sequence LDMGDLSLLGGELGNGSDDV. Residues 74-94 show a composition bias toward acidic residues; it reads VVGDDDDDDDDDDDDDDDDDD. Residues 148–160 show a composition bias toward basic residues; that stretch reads KRTKFAKSSKSSK. A helical transmembrane segment spans residues 185-205; the sequence is WPILTFVVIWVTILGFLYLAV. One can recognise a PNPLA domain in the interval 360–552; the sequence is LCLSGGACFA…RTDIPIDALN (193 aa). A GXSXG motif is present at residues 391–395; it reads GTSGG. Serine 393 functions as the Nucleophile in the catalytic mechanism. Residue aspartate 539 is the Proton acceptor of the active site. The interval 753–815 is disordered; sequence GSTLRDDDAD…LTKERRHTVY (63 aa). Over residues 759-799 the composition is skewed to acidic residues; the sequence is DDADADVDEDDNEDEDEEDEDENDYEEYDVEDLDDPYESDA.

This sequence belongs to the PLPL family.

It localises to the membrane. Its function is as follows. Probable lipid hydrolase. This is Patatin-like phospholipase domain-containing protein LELG_00944 from Lodderomyces elongisporus (strain ATCC 11503 / CBS 2605 / JCM 1781 / NBRC 1676 / NRRL YB-4239) (Yeast).